Consider the following 31-residue polypeptide: Potassium channel toxin alpha-KTx 5.1 (31 aa).

3 cysteine pairs are disulfide-bonded: C3-C21, C8-C26, and C12-C28. The interval 6–9 is [R/K]XCQ motif; it reads RMCQ. H31 is subject to Histidine amide.

This sequence belongs to the short scorpion toxin superfamily. Potassium channel inhibitor family. Alpha-KTx 05 subfamily. Post-translationally, two disulfide bonds are the minimal requirement needed to produce a nativelike and bio-active conformation in this toxin. The third disulfide provides an additional contribution to structure stabilization and can modulate biological potency depending on its position and the structural regions involved in biological activity. In terms of tissue distribution, expressed by the venom gland.

The protein localises to the secreted. Blocker for the small conductance calcium-activated potassium channels. Shows the best affinity for KCa2.2/KCNN2 (Kd=0.2 nM), followed by KCa2.3/KCNN3 (Kd=1.1 nM) and KCa2.1/KCNN1 (Kd=325 nM). The chain is Potassium channel toxin alpha-KTx 5.1 from Leiurus hebraeus (Hebrew deathstalker scorpion).